A 198-amino-acid chain; its full sequence is Holliday junction resolvase RecU (198 aa).

A disordered region spans residues 1–21 (MVNYPHKLSSQKRQPSLSQPK). Positions 11–21 (QKRQPSLSQPK) are enriched in polar residues. Mg(2+)-binding residues include T81, D83, E96, and Q115.

It belongs to the RecU family. It depends on Mg(2+) as a cofactor.

It is found in the cytoplasm. The catalysed reaction is Endonucleolytic cleavage at a junction such as a reciprocal single-stranded crossover between two homologous DNA duplexes (Holliday junction).. Endonuclease that resolves Holliday junction intermediates in genetic recombination. Cleaves mobile four-strand junctions by introducing symmetrical nicks in paired strands. Promotes annealing of linear ssDNA with homologous dsDNA. Required for DNA repair, homologous recombination and chromosome segregation. In Streptococcus pneumoniae (strain ATCC 700669 / Spain 23F-1), this protein is Holliday junction resolvase RecU.